A 760-amino-acid chain; its full sequence is Serine/threonine-protein kinase PknG (760 aa).

The disordered stretch occupies residues 1-31 (MTSPENPDLPDADDAYVDSGPGTQPASLEDL). The Protein kinase domain occupies 161–403 (YEIKGCIAHG…SAEEMSSQLL (243 aa)). Residues 167 to 175 (IAHGGLGWV) and Lys191 contribute to the ATP site. Asp286 functions as the Proton acceptor in the catalytic mechanism.

Belongs to the protein kinase superfamily. Ser/Thr protein kinase family. As to quaternary structure, interacts with GarA in vitro.

It catalyses the reaction L-seryl-[protein] + ATP = O-phospho-L-seryl-[protein] + ADP + H(+). It carries out the reaction L-threonyl-[protein] + ATP = O-phospho-L-threonyl-[protein] + ADP + H(+). This Mycolicibacterium smegmatis (strain ATCC 700084 / mc(2)155) (Mycobacterium smegmatis) protein is Serine/threonine-protein kinase PknG (pknG).